The primary structure comprises 92 residues: Small ribosomal subunit protein uS19c (92 aa).

Belongs to the universal ribosomal protein uS19 family.

The protein resides in the plastid. It localises to the chloroplast. Functionally, protein S19 forms a complex with S13 that binds strongly to the 16S ribosomal RNA. The chain is Small ribosomal subunit protein uS19c from Chara vulgaris (Common stonewort).